The primary structure comprises 342 residues: Keratin-associated protein 29-1 (342 aa).

Repeat copies occupy residues 5 to 9, 91 to 95, 239 to 243, 309 to 313, and 324 to 328. Positions 5-328 are 5 X 5 AA repeats of C-C-X(3); it reads CCPENPTAVP…SSGPGCCPPT (324 aa).

This sequence belongs to the KRTAP type 10 family.

This is Keratin-associated protein 29-1 (Krtap29-1) from Mus musculus (Mouse).